We begin with the raw amino-acid sequence, 200 residues long: Kunitz type trypsin inhibitor 111 (200 aa).

Residues Met1 to Ala24 form the signal peptide. 3 disulfide bridges follow: Cys62–Cys108, Cys160–Cys172, and Cys165–Cys168.

This sequence belongs to the protease inhibitor I3 (leguminous Kunitz-type inhibitor) family. In terms of assembly, interacts with SCP1.

It is found in the secreted. The protein resides in the extracellular space. The protein localises to the apoplast. The sequence is that of Kunitz type trypsin inhibitor 111 (KPI111) from Medicago truncatula (Barrel medic).